The following is a 152-amino-acid chain: UPF0225 protein YchJ (152 aa).

The protein belongs to the UPF0225 family.

The chain is UPF0225 protein YchJ from Escherichia coli O81 (strain ED1a).